Reading from the N-terminus, the 510-residue chain is Dermokine (510 aa).

The first 21 residues, 1–21, serve as a signal peptide directing secretion; sequence MKLKGSLACLLLFLLLGSGEA. A disordered region spans residues 117–362; the sequence is VDPAHKSWQG…SSGEGEAVSG (246 aa). Residues 124-137 are compositionally biased toward polar residues; sequence WQGTPGSNGAWGTN. Residues 141 to 158 are compositionally biased toward gly residues; that stretch reads PSGGHGIPGSQGSSGGPG. Residues 194 to 221 show a composition bias toward polar residues; sequence GANSQGTSPQPGSVRSNNNRNTECTTPP. Gly residues-rich tracts occupy residues 222 to 231, 240 to 254, and 264 to 292; these read GSGGSSGNSG, TNGGGSSGGSNGGSN, and SNGGGSSNSGGSNGGGSNGGGSSNGGGSN. Low complexity-rich tracts occupy residues 293 to 303 and 319 to 332; these read AGSSGSSGSSS and PSPSSGSRVGSGVR. The segment covering 344-355 has biased composition (gly residues); it reads GGSGGQGQGSSG.

It belongs to the dermokine family. In terms of assembly, homooligomer. Seems to be able to homodimerize and homotrimerize. In terms of processing, O-glycosylated.

Its subcellular location is the secreted. In terms of biological role, may act as a soluble regulator of keratinocyte differentiation. In Bos taurus (Bovine), this protein is Dermokine (DMKN).